The sequence spans 665 residues: Intraflagellar transport protein 70B (665 aa).

7 TPR repeats span residues 11–44 (DGEF…SPRS), 45–78 (RAGL…HPEL), 154–187 (TDGQ…SGYQ), 189–221 (DLSY…GIRQ), 393–424 (LTIQ…EKYI), 425–457 (PVLM…CNDH), and 459–492 (VWKL…HYDN). Positions 130–154 (PGSRSLVEQLPSREGGEESGGENET) are disordered. Positions 508-535 (YIMTSQNEEAEELMRKIEKEEEQLSYDD) form a coiled coil. One copy of the TPR 8 repeat lies at 544 to 577 (CIVNLVIGTLYCAKGNYDFGISRVIKSLEPYNKK).

It belongs to the TTC30/dfy-1/fleer family. Interacts with the IFT B complex components IFT27, IFT46, IFT74, IFT52, IFT57, IFT80, IFT81 and IFT88. Interacts with KIF17.

The protein localises to the cell projection. The protein resides in the cilium. Functionally, required for polyglutamylation of axonemal tubulin. Plays a role in anterograde intraflagellar transport (IFT), the process by which cilia precursors are transported from the base of the cilium to the site of their incorporation at the tip. The protein is Intraflagellar transport protein 70B of Homo sapiens (Human).